The following is a 39-amino-acid chain: Potassium channel toxin alpha-KTx 2.18 (39 aa).

Cystine bridges form between C7-C29, C13-C34, and C17-C36. I39 carries the post-translational modification Isoleucine amide.

It belongs to the short scorpion toxin superfamily. Potassium channel inhibitor family. Alpha-KTx 02 subfamily. As to expression, expressed by the venom gland.

Its subcellular location is the secreted. Its function is as follows. Weakly blocks Kv1.3/KCNA3 voltage-gated potassium channels. The chain is Potassium channel toxin alpha-KTx 2.18 from Centruroides limpidus (Mexican scorpion).